A 1486-amino-acid chain; its full sequence is Glutamate synthase [NADPH] large chain (1486 aa).

A propeptide spanning residues 1–11 (MLYDKSLERDN) is cleaved from the precursor. The active-site Nucleophile is C12. In terms of domain architecture, Glutamine amidotransferase type-2 spans 12–402 (CGFGLIAHIE…PGELMVIDTR (391 aa)). 1049-1101 (LVETQQALVANGLRHKIRLQVDGGLKTGVDIIKAAILGAESFGFGTGPMVALG) contributes to the FMN binding site. Residues C1102, C1108, and C1113 each coordinate [3Fe-4S] cluster.

This sequence belongs to the glutamate synthase family. Aggregate of 4 catalytic active heterodimers, consisting of a large and a small subunit. [3Fe-4S] cluster is required as a cofactor. The cofactor is FAD. It depends on FMN as a cofactor.

The catalysed reaction is 2 L-glutamate + NADP(+) = L-glutamine + 2-oxoglutarate + NADPH + H(+). It participates in amino-acid biosynthesis; L-glutamate biosynthesis via GLT pathway; L-glutamate from 2-oxoglutarate and L-glutamine (NADP(+) route): step 1/1. Its pathway is energy metabolism; nitrogen metabolism. Functionally, catalyzes the conversion of L-glutamine and 2-oxoglutarate into two molecules of L-glutamate. This is Glutamate synthase [NADPH] large chain (gltB) from Escherichia coli (strain K12).